The primary structure comprises 158 residues: Transcription elongation factor GreB (158 aa).

The stretch at 53–75 (KRRLREIDRRVRFLTKRLEVLQI) forms a coiled coil.

It belongs to the GreA/GreB family. GreB subfamily.

Necessary for efficient RNA polymerase transcription elongation past template-encoded arresting sites. The arresting sites in DNA have the property of trapping a certain fraction of elongating RNA polymerases that pass through, resulting in locked ternary complexes. Cleavage of the nascent transcript by cleavage factors such as GreA or GreB allows the resumption of elongation from the new 3'terminus. GreB releases sequences of up to 9 nucleotides in length. In Haemophilus influenzae (strain ATCC 51907 / DSM 11121 / KW20 / Rd), this protein is Transcription elongation factor GreB.